The following is a 1501-amino-acid chain: Inactive protein tyrosine kinase pTKL (1501 aa).

N-linked (GlcNAc...) asparagine glycosylation is found at Asn-64, Asn-128, and Asn-133. The span at 204–221 (KKNKKNKKNKKKKNKKTK) shows a compositional bias: basic residues. Residues 204 to 223 (KKNKKNKKNKKKKNKKTKNT) form a disordered region. Asn-239, Asn-242, Asn-258, and Asn-327 each carry an N-linked (GlcNAc...) asparagine glycan. The span at 257-273 (MNISLHEKNDKKNEKKN) shows a compositional bias: basic and acidic residues. The interval 257 to 276 (MNISLHEKNDKKNEKKNEKK) is disordered. In terms of domain architecture, SAM spans 301-366 (WSLREVIQWL…LQLIKNLQVM (66 aa)). The tract at residues 392-425 (NKNIKKGKNIKKEKKKKKEKNIKKEKKKKKKETK) is disordered. Over residues 394-424 (NIKKGKNIKKEKKKKKEKNIKKEKKKKKKET) the composition is skewed to basic residues. Residues 399–433 (KNIKKEKKKKKEKNIKKEKKKKKKETKKFNNMDKK) adopt a coiled-coil conformation. Asn-448, Asn-463, and Asn-471 each carry an N-linked (GlcNAc...) asparagine glycan. An RVxF motif 1 motif is present at residues 483–486 (KVSF). Asn-506 carries an N-linked (GlcNAc...) asparagine glycan. Over residues 543–597 (QLSSPLSSPLSSPSPSSSPSSSPSSSPSSSPSSSPSPSSSPSPSSSPSSSPSSSP) the composition is skewed to low complexity. Positions 543–607 (QLSSPLSSPL…SSPPSPLSYK (65 aa)) are disordered. An N-linked (GlcNAc...) asparagine glycan is attached at Asn-652. The disordered stretch occupies residues 659–678 (IKKSKSKYNNDKKEQKKLPL). A compositionally biased stretch (basic and acidic residues) spans 666–675 (YNNDKKEQKK). 5 N-linked (GlcNAc...) asparagine glycosylation sites follow: Asn-681, Asn-712, Asn-737, Asn-811, and Asn-819. Residues 836–844 (QNINNFGKY) and Lys-864 contribute to the ATP site. N-linked (GlcNAc...) asparagine glycans are attached at residues Asn-1024, Asn-1031, Asn-1074, and Asn-1157. Positions 1088–1483 (FHYQHNVLCG…HILKTISTLY (396 aa)) constitute a Protein kinase domain. An RVxF motif 2 motif is present at residues 1238-1241 (KVLF). The N-linked (GlcNAc...) asparagine glycan is linked to Asn-1382.

It belongs to the protein kinase superfamily. TKL Ser/Thr protein kinase family. Interacts (via RVxF motif 1 and/or 2) with phosphatase PP1C. May interact (via SAM domain) with SERA5 (via C-terminus).

It localises to the parasitophorous vacuole. Its subcellular location is the host cell membrane. The protein resides in the host cytoplasm. The protein localises to the host cytoskeleton. This Plasmodium falciparum (isolate 3D7) protein is Inactive protein tyrosine kinase pTKL.